The chain runs to 110 residues: uncharacterized protein (110 aa).

3 helical membrane-spanning segments follow: residues 5–25 (ILAI…PIHL), 62–82 (FPII…AIVS), and 90–110 (GISI…LISI).

To A.fulgidus AF1754.

It localises to the cell membrane. This is an uncharacterized protein from Methanocaldococcus jannaschii (strain ATCC 43067 / DSM 2661 / JAL-1 / JCM 10045 / NBRC 100440) (Methanococcus jannaschii).